Here is a 101-residue protein sequence, read N- to C-terminus: MIPGELFPAEGELILNQGRAVTRLMVANTGDRPVQVGSHYHFAETNPALEFDRGAARGMRLDIAAGTAVRFEPGQRREVVLIPIGGARRIYGFNQQVMGEL.

The protein belongs to the urease beta subunit family. Heterotrimer of UreA (gamma), UreB (beta) and UreC (alpha) subunits. Three heterotrimers associate to form the active enzyme.

Its subcellular location is the cytoplasm. The enzyme catalyses urea + 2 H2O + H(+) = hydrogencarbonate + 2 NH4(+). Its pathway is nitrogen metabolism; urea degradation; CO(2) and NH(3) from urea (urease route): step 1/1. The polypeptide is Urease subunit beta (Ruegeria pomeroyi (strain ATCC 700808 / DSM 15171 / DSS-3) (Silicibacter pomeroyi)).